A 488-amino-acid polypeptide reads, in one-letter code: Bifunctional protein GlmU (488 aa).

Positions 1-237 (MPRTRTPLAA…AEEASGVNDR (237 aa)) are pyrophosphorylase. UDP-N-acetyl-alpha-D-glucosamine is bound by residues 13–16 (LAAG), Lys27, Gln82, 87–88 (GT), 110–112 (SGD), Gly149, Glu164, Asn179, and Asn235. Asp112 provides a ligand contact to Mg(2+). Asn235 provides a ligand contact to Mg(2+). Residues 238 to 258 (VELSRANRVMVGRLAEAFMRA) are linker. The N-acetyltransferase stretch occupies residues 259–488 (GVTIEDPARF…KGRPAARRAS (230 aa)). UDP-N-acetyl-alpha-D-glucosamine contacts are provided by Arg341 and Lys359. His371 (proton acceptor) is an active-site residue. UDP-N-acetyl-alpha-D-glucosamine-binding residues include Tyr374 and Asn385. Acetyl-CoA is bound by residues Ala388, 394–395 (NY), Ser413, Ala431, and Arg448. The disordered stretch occupies residues 459-488 (AQRQAEKQMKGTATGPASARKGRPAARRAS). Basic residues predominate over residues 478-488 (RKGRPAARRAS).

The protein in the N-terminal section; belongs to the N-acetylglucosamine-1-phosphate uridyltransferase family. In the C-terminal section; belongs to the transferase hexapeptide repeat family. As to quaternary structure, homotrimer. Mg(2+) serves as cofactor.

The protein localises to the cytoplasm. The enzyme catalyses alpha-D-glucosamine 1-phosphate + acetyl-CoA = N-acetyl-alpha-D-glucosamine 1-phosphate + CoA + H(+). It carries out the reaction N-acetyl-alpha-D-glucosamine 1-phosphate + UTP + H(+) = UDP-N-acetyl-alpha-D-glucosamine + diphosphate. It functions in the pathway nucleotide-sugar biosynthesis; UDP-N-acetyl-alpha-D-glucosamine biosynthesis; N-acetyl-alpha-D-glucosamine 1-phosphate from alpha-D-glucosamine 6-phosphate (route II): step 2/2. Its pathway is nucleotide-sugar biosynthesis; UDP-N-acetyl-alpha-D-glucosamine biosynthesis; UDP-N-acetyl-alpha-D-glucosamine from N-acetyl-alpha-D-glucosamine 1-phosphate: step 1/1. The protein operates within bacterial outer membrane biogenesis; LPS lipid A biosynthesis. Functionally, catalyzes the last two sequential reactions in the de novo biosynthetic pathway for UDP-N-acetylglucosamine (UDP-GlcNAc). The C-terminal domain catalyzes the transfer of acetyl group from acetyl coenzyme A to glucosamine-1-phosphate (GlcN-1-P) to produce N-acetylglucosamine-1-phosphate (GlcNAc-1-P), which is converted into UDP-GlcNAc by the transfer of uridine 5-monophosphate (from uridine 5-triphosphate), a reaction catalyzed by the N-terminal domain. This chain is Bifunctional protein GlmU, found in Anaeromyxobacter dehalogenans (strain 2CP-1 / ATCC BAA-258).